The sequence spans 267 residues: Glutamate racemase (267 aa).

Substrate is bound by residues 9–10 (DS) and 41–42 (YS). C73 serves as the catalytic Proton donor/acceptor. 74–75 (NT) is a binding site for substrate. The active-site Proton donor/acceptor is C184. Residue 185-186 (TH) participates in substrate binding.

This sequence belongs to the aspartate/glutamate racemases family.

It catalyses the reaction L-glutamate = D-glutamate. Its pathway is cell wall biogenesis; peptidoglycan biosynthesis. Functionally, provides the (R)-glutamate required for cell wall biosynthesis. The chain is Glutamate racemase from Glaesserella parasuis serovar 5 (strain SH0165) (Haemophilus parasuis).